A 122-amino-acid polypeptide reads, in one-letter code: Large ribosomal subunit protein uL29A (122 aa).

The stretch at 10 to 69 (QLGIKQIEERAAEIKADLAALRQKKNSGDVGANDIKTAKKNLARALTVRREKILEELVEA) forms a coiled coil.

Belongs to the universal ribosomal protein uL29 family. Component of the large ribosomal subunit.

The protein resides in the cytoplasm. The protein is Large ribosomal subunit protein uL29A (RPL35A) of Encephalitozoon cuniculi (strain GB-M1) (Microsporidian parasite).